A 98-amino-acid chain; its full sequence is NADH-ubiquinone oxidoreductase chain 4L (98 aa).

3 helical membrane-spanning segments follow: residues Met1–Leu21, Ser29–Leu49, and Val59–Val79.

Belongs to the complex I subunit 4L family. Core subunit of respiratory chain NADH dehydrogenase (Complex I) which is composed of 45 different subunits.

It localises to the mitochondrion inner membrane. The catalysed reaction is a ubiquinone + NADH + 5 H(+)(in) = a ubiquinol + NAD(+) + 4 H(+)(out). Core subunit of the mitochondrial membrane respiratory chain NADH dehydrogenase (Complex I) which catalyzes electron transfer from NADH through the respiratory chain, using ubiquinone as an electron acceptor. Part of the enzyme membrane arm which is embedded in the lipid bilayer and involved in proton translocation. This Hemiechinus auritus (Long-eared hedgehog) protein is NADH-ubiquinone oxidoreductase chain 4L (MT-ND4L).